The sequence spans 367 residues: Cystinosin (367 aa).

The first 22 residues, 1-22 (MIRNWLTIFILFPLKLVEKCES), serve as a signal peptide directing secretion. The Lumenal portion of the chain corresponds to 23–125 (SVSLTVPPVV…LVIRSSAISI (103 aa)). 3 N-linked (GlcNAc...) (high mannose) asparagine glycosylation sites follow: asparagine 36, asparagine 41, and asparagine 51. The N-linked (GlcNAc...) asparagine glycan is linked to asparagine 66. 3 N-linked (GlcNAc...) (high mannose) asparagine glycosylation sites follow: asparagine 84, asparagine 104, and asparagine 107. A PQ-loop 1 domain is found at 123 to 189 (ISIINQVIGW…LLWVPYIKEQ (67 aa)). Residues 126 to 150 (INQVIGWIYFVAWSISFYPQVIMNW) form a helical membrane-spanning segment. The Cytoplasmic portion of the chain corresponds to 151-159 (RRKSVIGLS). A helical membrane pass occupies residues 160–179 (FDFVALNLTGFVAYSVFNIG). Asparagine 166 is an L-cystine binding site. At 180 to 202 (LLWVPYIKEQFLLKYPNGVNPVN) the chain is on the lumenal side. Residues 203–225 (SNDVFFSLHAVVLTLIIIVQCCL) traverse the membrane as a helical segment. H(+) is bound at residue aspartate 205. Residues 226–234 (YERGGQRVS) are Cytoplasmic-facing. Residues 235-257 (WPAIGFLVLAWLFAFVTMIVAAV) form a helical membrane-spanning segment. Over 258 to 263 (GVTTWL) the chain is Lumenal. The PQ-loop 2 domain occupies 263 to 328 (LQFLFCFSYI…QSYNNDQWTL (66 aa)). Residues 264–289 (QFLFCFSYIKLAVTLVKYFPQAYMNF) form a helical membrane-spanning segment. L-cystine contacts are provided by lysine 273, lysine 280, and tyrosine 281. Residues 290 to 298 (YYKSTEGWS) lie on the Cytoplasmic side of the membrane. Residues 299-308 (IGNVLLDFTG) form a helical membrane-spanning segment. L-cystine contacts are provided by asparagine 301 and aspartate 305. Aspartate 305 is a H(+) binding site. Topologically, residues 309 to 331 (GSFSLLQMFLQSYNNDQWTLIFG) are lumenal. Residues 332–354 (DPTKFGLGVFSIVFDVVFFIQHF) form a helical membrane-spanning segment. Position 346 (aspartate 346) interacts with H(+). Over 355 to 367 (CLYRKRPGYDQLN) the chain is Cytoplasmic. The Lysosomal targeting motif signature appears at 362 to 366 (GYDQL).

It belongs to the cystinosin family. Interacts with components of the V-ATPase complex. Interacts with components of the Ragulator complex. Interacts with RRAGA/RagA and RRAGC/RagC. Interacts with AP-3 complex subunit mu (AP3M1 or AP3M2). Strongly expressed in pancreas, kidney (adult and fetal), skeletal muscle, melanocytes and keratinocytes. Expressed at lower levels in placenta and heart. Weakly expressed in lung, liver and brain (adult and fetal). As to expression, represents 5-20 % of CTNS transcripts, with the exception of the testis that expresses both isoforms in equal proportions.

It is found in the lysosome membrane. It localises to the melanosome membrane. Its subcellular location is the cell membrane. It catalyses the reaction L-cystine(out) + H(+)(out) = L-cystine(in) + H(+)(in). With respect to regulation, switches between a lumen- and a cytosol-open conformation: pH induces conformational changes and shifts the equilibrium to facilitate the transition between the lumen- and cytosol-open conformation, thereby promoting cystine transport. Protonation of specific aspartate residues (Asp-205, Asp-305 and Asp-346) favors the cytosol-open conformation. Cystine/H(+) symporter that mediates export of cystine, the oxidized dimer of cysteine, from lysosomes. Plays an important role in melanin synthesis by catalyzing cystine export from melanosomes, possibly by inhibiting pheomelanin synthesis. In addition to cystine export, also acts as a positive regulator of mTORC1 signaling in kidney proximal tubular cells, via interactions with components of the v-ATPase and Ragulator complexes. Also involved in small GTPase-regulated vesicle trafficking and lysosomal localization of LAMP2A, independently of cystine transporter activity. This is Cystinosin from Homo sapiens (Human).